Reading from the N-terminus, the 369-residue chain is MDAEGLSTDELFCFLQAKRNEDFSYSHILSSMCTTPHPVAVQAHNLFMETNLGDPGLFPGTATLEDRLIRWFADLYHEPSAGGCTTSGGTESNIQVLRFCKKTKNVKEPNIIVPASAHFSFEKACGMMDIEMRVVPVDEQYRMKTDAAGELIDKNTCCIVGVAGTTEYGMTDPIPALGKLAEQEGVHLHVDAAFGGYVLPFLDDAPPFDFSVPGVGSIAVDPHKMGLSTIPSGVLMVRDERVFCNLLVETPYLTTKQAYSLTGTRPGASVAAAYAVMAYLGRKGMKALVTGCMENTRRMIEGMEAFGVHRKVTPDVNVATFEHVSVPSPWVVSYTRKGDLRIVCMPHVTRDVVEAFLSDFGESYVSHIS.

K224 is subject to N6-(pyridoxal phosphate)lysine.

The protein belongs to the group II decarboxylase family. MfnA subfamily. Requires pyridoxal 5'-phosphate as cofactor.

The enzyme catalyses L-tyrosine + H(+) = tyramine + CO2. It catalyses the reaction L-aspartate + H(+) = beta-alanine + CO2. Its pathway is cofactor biosynthesis; methanofuran biosynthesis. The protein operates within cofactor biosynthesis; coenzyme A biosynthesis. Catalyzes the decarboxylation of L-tyrosine to produce tyramine for methanofuran biosynthesis. Can also catalyze the decarboxylation of L-aspartate to produce beta-alanine for coenzyme A (CoA) biosynthesis. In Methanospirillum hungatei JF-1 (strain ATCC 27890 / DSM 864 / NBRC 100397 / JF-1), this protein is Probable L-tyrosine/L-aspartate decarboxylase.